The following is a 101-amino-acid chain: Small ribosomal subunit protein uS14 (101 aa).

This sequence belongs to the universal ribosomal protein uS14 family. As to quaternary structure, part of the 30S ribosomal subunit. Contacts proteins S3 and S10.

Its function is as follows. Binds 16S rRNA, required for the assembly of 30S particles and may also be responsible for determining the conformation of the 16S rRNA at the A site. The chain is Small ribosomal subunit protein uS14 from Aeromonas salmonicida (strain A449).